Reading from the N-terminus, the 307-residue chain is Phosphonates import ATP-binding protein PhnC (307 aa).

Positions 4–252 (IRIERLSKTF…RLHALYGDDA (249 aa)) constitute an ABC transporter domain. 37–44 (GASGSGKS) serves as a coordination point for ATP. Positions 265–275 (AAREAAGEPAR) are enriched in basic and acidic residues. The tract at residues 265–307 (AAREAAGEPARRAPAAFDSAGSPDLPDSQPASPRRMLAASSMR) is disordered.

This sequence belongs to the ABC transporter superfamily. Phosphonates importer (TC 3.A.1.9.1) family. As to quaternary structure, the complex is composed of two ATP-binding proteins (PhnC), two transmembrane proteins (PhnE) and a solute-binding protein (PhnD).

It is found in the cell inner membrane. The catalysed reaction is phosphonate(out) + ATP + H2O = phosphonate(in) + ADP + phosphate + H(+). Part of the ABC transporter complex PhnCDE involved in phosphonates import. Responsible for energy coupling to the transport system. This Burkholderia pseudomallei (strain 1710b) protein is Phosphonates import ATP-binding protein PhnC.